We begin with the raw amino-acid sequence, 812 residues long: Valine--tRNA ligase (812 aa).

Positions 46-56 (PTVSGQLHIGH) match the 'HIGH' region motif. Positions 536–540 (KMSKS) match the 'KMSKS' region motif. Lysine 539 serves as a coordination point for ATP.

Belongs to the class-I aminoacyl-tRNA synthetase family. ValS type 2 subfamily. In terms of assembly, monomer.

The protein localises to the cytoplasm. It carries out the reaction tRNA(Val) + L-valine + ATP = L-valyl-tRNA(Val) + AMP + diphosphate. Its function is as follows. Catalyzes the attachment of valine to tRNA(Val). As ValRS can inadvertently accommodate and process structurally similar amino acids such as threonine, to avoid such errors, it has a 'posttransfer' editing activity that hydrolyzes mischarged Thr-tRNA(Val) in a tRNA-dependent manner. In Rickettsia rickettsii (strain Iowa), this protein is Valine--tRNA ligase.